The primary structure comprises 124 residues: MATINQLVRKPRVRQKQKSNVPALQACPQKRGVCTRVYTTTPKKPNSAMRKVARIRLTNGMEVTSYIGGEGHNLQEHSVVLIRGGRVKDLPGVRYHIVRGSLDTAGVGDRRQGRSKYGAKRPKG.

Residues 1-23 are disordered; it reads MATINQLVRKPRVRQKQKSNVPA. Asp89 is modified (3-methylthioaspartic acid). Residues 103–124 are disordered; the sequence is DTAGVGDRRQGRSKYGAKRPKG. The span at 113–124 shows a compositional bias: basic residues; that stretch reads GRSKYGAKRPKG.

The protein belongs to the universal ribosomal protein uS12 family. Part of the 30S ribosomal subunit. Contacts proteins S8 and S17. May interact with IF1 in the 30S initiation complex.

With S4 and S5 plays an important role in translational accuracy. Its function is as follows. Interacts with and stabilizes bases of the 16S rRNA that are involved in tRNA selection in the A site and with the mRNA backbone. Located at the interface of the 30S and 50S subunits, it traverses the body of the 30S subunit contacting proteins on the other side and probably holding the rRNA structure together. The combined cluster of proteins S8, S12 and S17 appears to hold together the shoulder and platform of the 30S subunit. The chain is Small ribosomal subunit protein uS12 from Nitrosococcus oceani (strain ATCC 19707 / BCRC 17464 / JCM 30415 / NCIMB 11848 / C-107).